A 461-amino-acid polypeptide reads, in one-letter code: Asparagine--tRNA ligase (461 aa).

Belongs to the class-II aminoacyl-tRNA synthetase family. As to quaternary structure, homodimer.

It is found in the cytoplasm. It catalyses the reaction tRNA(Asn) + L-asparagine + ATP = L-asparaginyl-tRNA(Asn) + AMP + diphosphate + H(+). This chain is Asparagine--tRNA ligase, found in Nitratidesulfovibrio vulgaris (strain DP4) (Desulfovibrio vulgaris).